The primary structure comprises 300 residues: 33 kDa chaperonin (300 aa).

2 cysteine pairs are disulfide-bonded: C240–C242 and C273–C276.

Belongs to the HSP33 family. In terms of processing, under oxidizing conditions two disulfide bonds are formed involving the reactive cysteines. Under reducing conditions zinc is bound to the reactive cysteines and the protein is inactive.

Its subcellular location is the cytoplasm. Functionally, redox regulated molecular chaperone. Protects both thermally unfolding and oxidatively damaged proteins from irreversible aggregation. Plays an important role in the bacterial defense system toward oxidative stress. The protein is 33 kDa chaperonin of Cyanothece sp. (strain PCC 7425 / ATCC 29141).